The primary structure comprises 302 residues: Recombination-associated protein RdgC (302 aa).

This sequence belongs to the RdgC family.

It is found in the cytoplasm. The protein localises to the nucleoid. May be involved in recombination. This is Recombination-associated protein RdgC from Tolumonas auensis (strain DSM 9187 / NBRC 110442 / TA 4).